Reading from the N-terminus, the 201-residue chain is MNTLECLAVAVALAMDAFAVAIATGIRLREVSPRQTFRLAFHFGLFQALMPVAGWTLGLTVRGYIEQWDHWLAFGLLLYIGVRMMREAFEETEENDDRCDPTRGLTLIMLAVATSIDALAVGLSLSVLGIDIVTPAIVIGVVCLLFTATGLHLGRMLSRAESLGRRAALAGGVVLIGIGLRILYEHGVFDTAATLARSVLG.

5 helical membrane passes run 6-26 (CLAVAVALAMDAFAVAIATGI), 39-59 (LAFHFGLFQALMPVAGWTLGL), 105-125 (LTLIMLAVATSIDALAVGLSL), 127-147 (VLGIDIVTPAIVIGVVCLLFT), and 169-189 (LAGGVVLIGIGLRILYEHGVF).

It belongs to the MntP (TC 9.B.29) family.

The protein localises to the cell inner membrane. Its function is as follows. Probably functions as a manganese efflux pump. The chain is Putative manganese efflux pump MntP from Nitratidesulfovibrio vulgaris (strain ATCC 29579 / DSM 644 / CCUG 34227 / NCIMB 8303 / VKM B-1760 / Hildenborough) (Desulfovibrio vulgaris).